Consider the following 248-residue polypeptide: Granulin (248 aa).

It belongs to the polyhedrin family.

Component of the virus occlusion bodies, which are large proteinaceous structures, that protect the virus from the outside environment for extended periods until they are ingested by insect larvae. This Xestia c-nigrum granulosis virus (XnGV) protein is Granulin.